The chain runs to 488 residues: Glutamyl-tRNA(Gln) amidotransferase subunit A (488 aa).

Residues Lys77 and Ser152 each act as charge relay system in the active site. Ser176 serves as the catalytic Acyl-ester intermediate.

It belongs to the amidase family. GatA subfamily. In terms of assembly, heterotrimer of A, B and C subunits.

It carries out the reaction L-glutamyl-tRNA(Gln) + L-glutamine + ATP + H2O = L-glutaminyl-tRNA(Gln) + L-glutamate + ADP + phosphate + H(+). In terms of biological role, allows the formation of correctly charged Gln-tRNA(Gln) through the transamidation of misacylated Glu-tRNA(Gln) in organisms which lack glutaminyl-tRNA synthetase. The reaction takes place in the presence of glutamine and ATP through an activated gamma-phospho-Glu-tRNA(Gln). In Streptococcus pneumoniae (strain ATCC 700669 / Spain 23F-1), this protein is Glutamyl-tRNA(Gln) amidotransferase subunit A.